The chain runs to 375 residues: Naringenin 7-O-methyltransferase (375 aa).

Position 136-142 (136-142) interacts with substrate; the sequence is LNLDKVF. Positions 168-188 are substrate binding; sequence LFQYLGQDGNEPSNTLFNQAM. Residues glycine 219, aspartate 242, methionine 263, and lysine 276 each coordinate S-adenosyl-L-methionine. Histidine 280 serves as the catalytic Proton acceptor.

The protein belongs to the class I-like SAM-binding methyltransferase superfamily. Cation-independent O-methyltransferase family. COMT subfamily.

The enzyme catalyses (2S)-naringenin + S-adenosyl-L-methionine = (2S)-sakuranetin + S-adenosyl-L-homocysteine + H(+). Functionally, S-adenosyl-L-methionine-dependent methyltransferase involved in the biosynthesis of the sakuranetin, an inducible defense mechanism of O.sativa against pathogen attack. The chain is Naringenin 7-O-methyltransferase from Oryza sativa subsp. japonica (Rice).